The primary structure comprises 333 residues: 1D-myo-inositol 2-acetamido-2-deoxy-alpha-D-glucopyranoside deacetylase (333 aa).

Positions 18, 21, and 165 each coordinate Zn(2+).

The protein belongs to the MshB deacetylase family. The cofactor is Zn(2+).

It catalyses the reaction 1D-myo-inositol 2-acetamido-2-deoxy-alpha-D-glucopyranoside + H2O = 1D-myo-inositol 2-amino-2-deoxy-alpha-D-glucopyranoside + acetate. In terms of biological role, catalyzes the deacetylation of 1D-myo-inositol 2-acetamido-2-deoxy-alpha-D-glucopyranoside (GlcNAc-Ins) in the mycothiol biosynthesis pathway. This chain is 1D-myo-inositol 2-acetamido-2-deoxy-alpha-D-glucopyranoside deacetylase, found in Corynebacterium jeikeium (strain K411).